An 80-amino-acid chain; its full sequence is Beta-toxin KAaH2 (80 aa).

The N-terminal stretch at 1-22 (MMKLMLFSIIVILFSLIGSIHG) is a signal peptide. An LCN-type CS-alpha/beta domain is found at 25-80 (VPGNYPLDSSDDTYLCAPLGENPSCIQICRKHGVKYGYCYAFQCWCEYLEDKNVKI). Intrachain disulfides connect Cys-40–Cys-63, Cys-49–Cys-68, and Cys-53–Cys-70.

This sequence belongs to the long (3 C-C) scorpion toxin superfamily. Sodium/Potassium channel inhibitor family. In terms of tissue distribution, expressed by the venom gland.

It localises to the secreted. Functionally, weakly inhibits the vertebrate potassium channel Kv1.1/KCNA1. This is Beta-toxin KAaH2 from Androctonus australis (Sahara scorpion).